The chain runs to 60 residues: Large ribosomal subunit protein bL33 (60 aa).

It belongs to the bacterial ribosomal protein bL33 family.

This chain is Large ribosomal subunit protein bL33, found in Flavobacterium psychrophilum (strain ATCC 49511 / DSM 21280 / CIP 103535 / JIP02/86).